Here is a 289-residue protein sequence, read N- to C-terminus: uncharacterized protein (289 aa).

This is an uncharacterized protein from Homo sapiens (Human).